The sequence spans 159 residues: ATP synthase subunit b 2 (159 aa).

The chain crosses the membrane as a helical span at residues 1-21 (MDATFWAFIALVIFVAIVVYM).

The protein belongs to the ATPase B chain family. F-type ATPases have 2 components, F(1) - the catalytic core - and F(0) - the membrane proton channel. F(1) has five subunits: alpha(3), beta(3), gamma(1), delta(1), epsilon(1). F(0) has three main subunits: a(1), b(2) and c(10-14). The alpha and beta chains form an alternating ring which encloses part of the gamma chain. F(1) is attached to F(0) by a central stalk formed by the gamma and epsilon chains, while a peripheral stalk is formed by the delta and b chains.

The protein localises to the cell inner membrane. F(1)F(0) ATP synthase produces ATP from ADP in the presence of a proton or sodium gradient. F-type ATPases consist of two structural domains, F(1) containing the extramembraneous catalytic core and F(0) containing the membrane proton channel, linked together by a central stalk and a peripheral stalk. During catalysis, ATP synthesis in the catalytic domain of F(1) is coupled via a rotary mechanism of the central stalk subunits to proton translocation. Functionally, component of the F(0) channel, it forms part of the peripheral stalk, linking F(1) to F(0). The polypeptide is ATP synthase subunit b 2 (Brucella suis (strain ATCC 23445 / NCTC 10510)).